The primary structure comprises 378 residues: Ribosomal RNA large subunit methyltransferase G (378 aa).

This sequence belongs to the methyltransferase superfamily. RlmG family.

Its subcellular location is the cytoplasm. It carries out the reaction guanosine(1835) in 23S rRNA + S-adenosyl-L-methionine = N(2)-methylguanosine(1835) in 23S rRNA + S-adenosyl-L-homocysteine + H(+). Functionally, specifically methylates the guanine in position 1835 (m2G1835) of 23S rRNA. The chain is Ribosomal RNA large subunit methyltransferase G from Enterobacter sp. (strain 638).